A 950-amino-acid chain; its full sequence is MORC family CW-type zinc finger protein 1 (950 aa).

A coiled-coil region spans residues 281–342 (KGKFKTEVQK…TKHKSLRQKQ (62 aa)). Residues 465 to 530 (SLESLQWRRR…SCNQIERLPS (66 aa)) form a CW-type zinc finger. The Zn(2+) site is built by Cys-485, Cys-488, Cys-511, and Cys-522. 2 disordered regions span residues 532-551 (PLGTVNRRPPSKDERERQLQ) and 679-700 (KKQQSESLVQAGKASTDVASSR). Basic and acidic residues predominate over residues 541-550 (PSKDERERQL). Residues 885-916 (LGQCELKRKRTEEKLSDLRAKLALLLQKLQLG) adopt a coiled-coil conformation.

In terms of tissue distribution, expressed at very low level in male germ cells.

The protein localises to the nucleus. Its function is as follows. Required for spermatogenesis. Essential for de novo DNA methylation and silencing of transposable elements in the male embryonic germ cells. Not required for piRNA biosynthesis. This chain is MORC family CW-type zinc finger protein 1, found in Mus musculus (Mouse).